Reading from the N-terminus, the 249-residue chain is Ditrans,polycis-undecaprenyl-diphosphate synthase ((2E,6E)-farnesyl-diphosphate specific) (249 aa).

Asp-29 is an active-site residue. Asp-29 lines the Mg(2+) pocket. Substrate is bound by residues Gly-30–Arg-33, Trp-34, Arg-42, His-46, and Ser-74–Glu-76. Catalysis depends on Asn-77, which acts as the Proton acceptor. Substrate-binding positions include Trp-78, Arg-80, Arg-197, and Arg-203–Ser-205. Glu-216 is a Mg(2+) binding site.

This sequence belongs to the UPP synthase family. In terms of assembly, homodimer. Requires Mg(2+) as cofactor.

It carries out the reaction 8 isopentenyl diphosphate + (2E,6E)-farnesyl diphosphate = di-trans,octa-cis-undecaprenyl diphosphate + 8 diphosphate. Functionally, generates ditrans,octacis-undecaprenyl pyrophosphate (UPP) from isopentenyl pyrophosphate (IPP) and farnesyl diphosphate. UPP is the precursor of glycosyl carrier lipid in the biosynthesis of bacterial cell wall polysaccharide components such as peptidoglycan and lipopolysaccharide. This chain is Ditrans,polycis-undecaprenyl-diphosphate synthase ((2E,6E)-farnesyl-diphosphate specific) (uppS), found in Micrococcus luteus (Micrococcus lysodeikticus).